The primary structure comprises 418 residues: Deubiquitinase and deneddylase Dub1 (418 aa).

Residues 1-11 (MLSPTNSTSKT) are compositionally biased toward polar residues. Positions 1–23 (MLSPTNSTSKTAPVPPQDSSKPV) are disordered. A helical transmembrane segment spans residues 40-60 (TALVVLLVVVTLGLILLFYSF). A disordered region spans residues 72–145 (TRPSTKEQPT…LPPKAPKPVK (74 aa)). Positions 86-141 (VPLPSPPLAVPRPSTPPPPVISRPSMPPAPTPAISPPSTPSAPKPSTPPPLPPKAP) are enriched in pro residues. Active-site residues include histidine 288, aspartate 305, and cysteine 358.

The protein belongs to the peptidase C48 family.

It is found in the secreted. The protein resides in the host cell. The protein localises to the membrane. Functionally, effector proteins function to alter host cell physiology and promote bacterial survival in host tissues. This protease possesses deubiquitinating and deneddylating activities. This Chlamydia trachomatis serovar E (strain Sweden2) protein is Deubiquitinase and deneddylase Dub1 (cdu1).